Reading from the N-terminus, the 437-residue chain is Ribosomal protein uS12 methylthiotransferase RimO (437 aa).

In terms of domain architecture, MTTase N-terminal spans 3–118 (KKFYITTLGC…AGKILREKFP (116 aa)). The [4Fe-4S] cluster site is built by cysteine 12, cysteine 48, cysteine 81, cysteine 157, cysteine 161, and cysteine 164. A Radical SAM core domain is found at 143 to 370 (NYSKPYAYVK…RDSHLEILEE (228 aa)). The TRAM domain occupies 373 to 437 (ESRIGRTYDA…YEYDMNGTWV (65 aa)).

This sequence belongs to the methylthiotransferase family. RimO subfamily. The cofactor is [4Fe-4S] cluster.

It is found in the cytoplasm. The catalysed reaction is L-aspartate(89)-[ribosomal protein uS12]-hydrogen + (sulfur carrier)-SH + AH2 + 2 S-adenosyl-L-methionine = 3-methylsulfanyl-L-aspartate(89)-[ribosomal protein uS12]-hydrogen + (sulfur carrier)-H + 5'-deoxyadenosine + L-methionine + A + S-adenosyl-L-homocysteine + 2 H(+). Its function is as follows. Catalyzes the methylthiolation of an aspartic acid residue of ribosomal protein uS12. This chain is Ribosomal protein uS12 methylthiotransferase RimO, found in Leptospira interrogans serogroup Icterohaemorrhagiae serovar Lai (strain 56601).